The sequence spans 177 residues: uncharacterized protein (177 aa).

Residues 1–27 (MSHSRRAAPTQDQCHTPGFPTSRETSG) form a disordered region.

This is an uncharacterized protein from Homo sapiens (Human).